A 257-amino-acid chain; its full sequence is UPF0246 protein Shew185_1115 (257 aa).

Belongs to the UPF0246 family.

The protein is UPF0246 protein Shew185_1115 of Shewanella baltica (strain OS185).